Here is a 356-residue protein sequence, read N- to C-terminus: sn-glycerol-3-phosphate import ATP-binding protein UgpC (356 aa).

The region spanning 4-235 (LKLQAVTKSW…PASLFVASFI (232 aa)) is the ABC transporter domain. Position 37-44 (37-44 (GPSGCGKS)) interacts with ATP.

It belongs to the ABC transporter superfamily. sn-glycerol-3-phosphate importer (TC 3.A.1.1.3) family. In terms of assembly, the complex is composed of two ATP-binding proteins (UgpC), two transmembrane proteins (UgpA and UgpE) and a solute-binding protein (UgpB).

It localises to the cell inner membrane. It carries out the reaction sn-glycerol 3-phosphate(out) + ATP + H2O = sn-glycerol 3-phosphate(in) + ADP + phosphate + H(+). Functionally, part of the ABC transporter complex UgpBAEC involved in sn-glycerol-3-phosphate (G3P) import. Responsible for energy coupling to the transport system. This is sn-glycerol-3-phosphate import ATP-binding protein UgpC from Shigella boydii serotype 4 (strain Sb227).